The chain runs to 215 residues: UPF0502 protein YceH (215 aa).

The protein belongs to the UPF0502 family.

This Salmonella heidelberg (strain SL476) protein is UPF0502 protein YceH.